We begin with the raw amino-acid sequence, 238 residues long: Lipoarabinomannan carrier protein LprG (238 aa).

A signal peptide spans 1–26; that stretch reads MQAPKHHRRLFAVLATLNTATAVIAG. Residue Cys27 is the site of N-palmitoyl cysteine attachment. Residue Cys27 is the site of S-diacylglycerol cysteine attachment.

It belongs to the LppX/LprAFG lipoprotein family. Post-translationally, modified by Lgt on Cys-27 with an S-linked diacylglyceral, signal peptide is removed by LspA, Cys-27 is further modifed with a fatty acid on its amino group by Lnt yielding a triacylated protein. Probably glycosylated, which is required for T-cell activation.

Its subcellular location is the cell inner membrane. The protein resides in the secreted. It is found in the cell wall. In terms of biological role, helps membrane protein ML0556 (P55) transport triacylglycerides (TAG) across the inner cell membrane into the periplasm and probably ultimately to the outer membrane. Binds TAG in its hydrophobic cavity and transfers it between lipid bilayers. TAG probably regulates lipid metabolism and growth regulation and plays a structural role in the outer membrane. Binds di- and triacylated phosphatidyl-myo-inositol mannosides (PIMs), and glycolipid lipoglycan modulins lipoarabinomannan (LAM) and lipomannan (LM), facilitating their recognition by TLR2. Required for activity of drug efflux transporter ML0556. Required, probably with ML0556, for normal surface localization of LAM. Its function is as follows. Constitutes a host TLR2 agonist (toll-like receptor) able to stimulate proliferation of CD4+ T-cells derived from a human leprosy patient following protein processing/presentation by MHC class II molecules in peripheral blood mononuclear cells. The protein is Lipoarabinomannan carrier protein LprG of Mycobacterium leprae (strain TN).